Reading from the N-terminus, the 732-residue chain is Sesterbrasiliatriene synthase PbSS (732 aa).

The terpene cyclase stretch occupies residues Met-1–Thr-342. Mg(2+)-binding residues include Asp-105 and Asp-109. Substrate is bound by residues Asp-105, Asp-109, Arg-193–Glu-196, Phe-242–Phe-246, and Arg-334–Tyr-335. The DDXXD 1 signature appears at Asp-105–Asp-109. Residues Asp-238–Phe-246 carry the NSE/DTE motif. The prenyltransferase stretch occupies residues Thr-343–Leu-732. 2 disordered regions span residues Lys-371–Ser-390 and Ala-398–Asn-420. Residues Asn-411–Asn-420 are compositionally biased toward basic and acidic residues. Lys-453, Arg-456, and His-485 together coordinate isopentenyl diphosphate. Mg(2+) is bound by residues Asp-492 and Asp-496. Residues Asp-492–Asp-496 carry the DDXXD 2 motif. Arg-501 contacts dimethylallyl diphosphate. Arg-502 provides a ligand contact to isopentenyl diphosphate. Dimethylallyl diphosphate-binding residues include Lys-579, Thr-580, Gln-615, Asn-622, Lys-632, and Lys-642.

The protein in the N-terminal section; belongs to the terpene synthase family. In the C-terminal section; belongs to the FPP/GGPP synthase family. As to quaternary structure, hexamer. The cofactor is Mg(2+).

It catalyses the reaction isopentenyl diphosphate + (2E,6E)-farnesyl diphosphate = (2E,6E,10E)-geranylgeranyl diphosphate + diphosphate. The enzyme catalyses isopentenyl diphosphate + (2E,6E,10E)-geranylgeranyl diphosphate = (2E,6E,10E,14E)-geranylfarnesyl diphosphate + diphosphate. It participates in secondary metabolite biosynthesis; terpenoid biosynthesis. Its function is as follows. Bifunctional sesterterpene synthase that possesses both prenyl transferase and terpene cyclase activity, converting isopentenyl diphosphate and dimethylallyl diphosphate into geranylfarnesyl diphosphate (GFPP) and further converting GFPP into sesterbrasiliatriene. This Penicillium brasilianum protein is Sesterbrasiliatriene synthase PbSS (PbSS).